The primary structure comprises 298 residues: tRNA U34 carboxymethyltransferase (298 aa).

Carboxy-S-adenosyl-L-methionine-binding positions include lysine 69, tryptophan 83, lysine 88, glycine 107, 129–131 (DPS), 156–157 (VE), tyrosine 176, and arginine 291.

This sequence belongs to the class I-like SAM-binding methyltransferase superfamily. CmoB family. As to quaternary structure, homotetramer.

It carries out the reaction carboxy-S-adenosyl-L-methionine + 5-hydroxyuridine(34) in tRNA = 5-carboxymethoxyuridine(34) in tRNA + S-adenosyl-L-homocysteine + H(+). Functionally, catalyzes carboxymethyl transfer from carboxy-S-adenosyl-L-methionine (Cx-SAM) to 5-hydroxyuridine (ho5U) to form 5-carboxymethoxyuridine (cmo5U) at position 34 in tRNAs. The sequence is that of tRNA U34 carboxymethyltransferase from Campylobacter curvus (strain 525.92).